The following is a 345-amino-acid chain: MSEEEFYLFKNISSVGPWDGPQYHIAPVWAFYLQAAFMGTVFLIGFPLNAMVLVATLRYKKLRQPLNYILVNVSFGGFLLCIFSVFPVFVASCNGYFVFGRHVCALEGFLGTVAGLVTGWSLAFLAFERYIVICKPFGNFRFSSKHALTVVLATWTIGIGVSIPPFFGWSRFIPEGLQCSCGPDWYTVGTKYRSESYTWFLFIFCFIVPLSLICFSYTQLLRALKAVAAQQQESATTQKAEREVSRMVVVMVGSFCVCYVPYAAFAMYMVNNRNHGLDLRLVTIPSFFSKSACIYNPIIYCFMNKQFQACIMKMVCGKAMTDESDTCSSQKTEVSTVSSTQVGPN.

Over 1-30 (MSEEEFYLFKNISSVGPWDGPQYHIAPVWA) the chain is Extracellular. An N-linked (GlcNAc...) asparagine glycan is attached at Asn-11. Residues 31–55 (FYLQAAFMGTVFLIGFPLNAMVLVA) traverse the membrane as a helical segment. Residues 56–67 (TLRYKKLRQPLN) lie on the Cytoplasmic side of the membrane. Residues 68–93 (YILVNVSFGGFLLCIFSVFPVFVASC) form a helical membrane-spanning segment. Residues 94 to 107 (NGYFVFGRHVCALE) lie on the Extracellular side of the membrane. Residues Cys-104 and Cys-181 are joined by a disulfide bond. A helical membrane pass occupies residues 108–127 (GFLGTVAGLVTGWSLAFLAF). The Cytoplasmic portion of the chain corresponds to 128 to 146 (ERYIVICKPFGNFRFSSKH). The helical transmembrane segment at 147 to 170 (ALTVVLATWTIGIGVSIPPFFGWS) threads the bilayer. Topologically, residues 171-196 (RFIPEGLQCSCGPDWYTVGTKYRSES) are extracellular. Residues 197-224 (YTWFLFIFCFIVPLSLICFSYTQLLRAL) form a helical membrane-spanning segment. Topologically, residues 225 to 246 (KAVAAQQQESATTQKAEREVSR) are cytoplasmic. Residues 247–270 (MVVVMVGSFCVCYVPYAAFAMYMV) form a helical membrane-spanning segment. Residues 271-278 (NNRNHGLD) are Extracellular-facing. A helical transmembrane segment spans residues 279–303 (LRLVTIPSFFSKSACIYNPIIYCFM). The residue at position 290 (Lys-290) is an N6-(retinylidene)lysine. Residues 304–345 (NKQFQACIMKMVCGKAMTDESDTCSSQKTEVSTVSSTQVGPN) lie on the Cytoplasmic side of the membrane.

It belongs to the G-protein coupled receptor 1 family. Opsin subfamily. In terms of processing, phosphorylated on some or all of the serine and threonine residues present in the C-terminal region. The three color pigments are found in the cone photoreceptor cells. Expressed throughout the epidermis and dermis, primarily in the stratum granulosum in the facial and abdominal skin (at protein level). Expressed in dermal fibroblasts (at protein level). Expressed in melanocytes (at protein level).

Its subcellular location is the cell membrane. It is found in the photoreceptor inner segment. The protein localises to the cell projection. The protein resides in the cilium. It localises to the photoreceptor outer segment. Its subcellular location is the cytoplasm. It is found in the perinuclear region. In terms of biological role, visual pigments are the light-absorbing molecules that mediate vision. They consist of an apoprotein, opsin, covalently linked to cis-retinal. Required for the maintenance of cone outer segment organization in the ventral retina, but not essential for the maintenance of functioning cone photoreceptors. Involved in ensuring correct abundance and localization of retinal membrane proteins. May increase spectral sensitivity in dim light. This chain is Short-wave-sensitive opsin 1 (OPN1SW), found in Homo sapiens (Human).